A 177-amino-acid polypeptide reads, in one-letter code: MNNSPLLVVGLGNPGPKYVGTRHNIGFEVAEELVSRSFGSFSVHKRSNTDIAQLPGLIVAKPRSFMNLSGTPIRALCDFFKISPANVIVVHDELELDFGSVKLRQGGGDHGHNGLKSTSKSLGTKDYWKLSMGIGRPPGRMDPASFVLKPFGKQELADIPIMAADAADLVEKHLQQG.

Tyr-18 is a binding site for tRNA. The Proton acceptor role is filled by His-23. TRNA-binding residues include Phe-65, Asn-67, and Asn-113.

It belongs to the PTH family. In terms of assembly, monomer.

It is found in the cytoplasm. It carries out the reaction an N-acyl-L-alpha-aminoacyl-tRNA + H2O = an N-acyl-L-amino acid + a tRNA + H(+). In terms of biological role, hydrolyzes ribosome-free peptidyl-tRNAs (with 1 or more amino acids incorporated), which drop off the ribosome during protein synthesis, or as a result of ribosome stalling. Its function is as follows. Catalyzes the release of premature peptidyl moieties from peptidyl-tRNA molecules trapped in stalled 50S ribosomal subunits, and thus maintains levels of free tRNAs and 50S ribosomes. The sequence is that of Peptidyl-tRNA hydrolase 1 from Corynebacterium glutamicum (strain ATCC 13032 / DSM 20300 / JCM 1318 / BCRC 11384 / CCUG 27702 / LMG 3730 / NBRC 12168 / NCIMB 10025 / NRRL B-2784 / 534).